The sequence spans 395 residues: Chorismate synthase (395 aa).

NADP(+)-binding residues include R40 and R46. The segment at 98–120 (LPREGRNAPLSRPRPGHADLTGM) is disordered. FMN is bound by residues 134–136 (RSS), 256–257 (QA), G301, 316–320 (KPIPS), and R342.

Belongs to the chorismate synthase family. In terms of assembly, homotetramer. FMNH2 is required as a cofactor.

It catalyses the reaction 5-O-(1-carboxyvinyl)-3-phosphoshikimate = chorismate + phosphate. It participates in metabolic intermediate biosynthesis; chorismate biosynthesis; chorismate from D-erythrose 4-phosphate and phosphoenolpyruvate: step 7/7. In terms of biological role, catalyzes the anti-1,4-elimination of the C-3 phosphate and the C-6 proR hydrogen from 5-enolpyruvylshikimate-3-phosphate (EPSP) to yield chorismate, which is the branch point compound that serves as the starting substrate for the three terminal pathways of aromatic amino acid biosynthesis. This reaction introduces a second double bond into the aromatic ring system. This chain is Chorismate synthase, found in Bifidobacterium longum subsp. infantis (strain ATCC 15697 / DSM 20088 / JCM 1222 / NCTC 11817 / S12).